A 305-amino-acid chain; its full sequence is MSNNNTQKPLPFGYQFIAGAVAGVSEILVMYPLDVVKTRVQLQKGTAVAGEEYYNGMFDCLRKIVKNEGFSRLYRGISAPILMEAPKRATKFAANDSWGAFYRNLFGAEKQTQSLAILTGATAGATESFVVVPFELVKIRLQDRASAGKYNGMLDVVKKIVAAEGPLAMYNGLESTLWRHILWNSGYFGCIFQVRAQLPAAEPGNKSQQTRNDLIAGTIGGTAGTILNTPMDVVKSRIQNTSKVPGQVPKYNWAWPAVGTVMKEEGFAALYKGFLPKVLRLGPGGGILLVVFTGVMDFFRNMRGE.

Solcar repeat units lie at residues L10–F101, Q111–Q197, and R211–F298. Helical transmembrane passes span F16–V36, S78–W98, L118–V137, T176–A196, Q208–N228, and L270–V291.

It belongs to the mitochondrial carrier (TC 2.A.29) family.

The protein localises to the mitochondrion inner membrane. The catalysed reaction is citrate(in) + H(+)(in) = citrate(out) + H(+)(out). Its function is as follows. Mitochondrial transporter that mediates citrate export from mitochondria to cytoplasm. Both ctpA, ctpB, and ctpD play important roles in citric acid transport across the mitochondrial membrane and function in a redundant manner. The protein is Mitochondrial citrate transporter D of Aspergillus niger (strain ATCC 1015 / CBS 113.46 / FGSC A1144 / LSHB Ac4 / NCTC 3858a / NRRL 328 / USDA 3528.7).